The primary structure comprises 506 residues: Cysteine--tRNA ligase (506 aa).

Cys34 serves as a coordination point for Zn(2+). Positions 36–46 match the 'HIGH' region motif; it reads PTVYDFAHIGN. Residues Cys230, His269, and Glu273 each coordinate Zn(2+). The 'KMSKS' region signature appears at 302 to 306; that stretch reads KMSKS. Lys305 provides a ligand contact to ATP.

This sequence belongs to the class-I aminoacyl-tRNA synthetase family. In terms of assembly, monomer. The cofactor is Zn(2+).

The protein resides in the cytoplasm. It catalyses the reaction tRNA(Cys) + L-cysteine + ATP = L-cysteinyl-tRNA(Cys) + AMP + diphosphate. In Brucella melitensis biotype 2 (strain ATCC 23457), this protein is Cysteine--tRNA ligase.